Reading from the N-terminus, the 1009-residue chain is Delphilin (1009 aa).

Disordered regions lie at residues 28–82 (CRSK…SNTM), 170–193 (EGPV…RSRS), 322–369 (ASPD…SRDT), 414–635 (ELSS…SDNN), and 990–1009 (SETQ…PLAW). A compositionally biased stretch (basic and acidic residues) spans 44-53 (RSQDHHERPQ). The 78-residue stretch at 95-172 (TIRVYRGKKS…MPSLVVEEGP (78 aa)) folds into the PDZ domain. Residues 322 to 332 (ASPDSVDSNPY) are compositionally biased toward polar residues. Low complexity-rich tracts occupy residues 334–352 (SLDS…SPLP) and 427–439 (DDST…SGSD). Pro residues-rich tracts occupy residues 441–455 (IPPP…PPPL), 462–477 (SPLP…PPPA), and 484–493 (IAPPPPPPRP). Low complexity predominate over residues 521 to 535 (SSPQPSSQPILQLHQ). Residues 557–602 (AQHTRLQHPSQSIYQSQQTTVPRTSPSLTKQKSLHSQPSQQSFEGT) are compositionally biased toward polar residues. Positions 607–628 (VPPPPPPPLPPPCDPPPLPKPS) are enriched in pro residues. The FH2 domain maps to 629-1009 (PKASDNNHMS…SPRIASPLAW (381 aa)).

It localises to the postsynaptic cell membrane. Postsynaptic scaffolding protein. The protein is Delphilin (grid2ip) of Danio rerio (Zebrafish).